The following is a 616-amino-acid chain: MPKYRSATTTHGRNMAGARALWRATGMTDADFGKPIIAVVNSFTQFVPGHVHLRDLGKLVAEQIEAAGGVAKEFNTIAVDDGIAMGHGGMLYSLPSRELIADSVEYMVNAHCADAMVCISNCDKITPGMLMASLRLNIPVIFVSGGPMEAGKTKLSDQIIKLDLVDAMIQGADPKVSDSQSDQVERSACPTCGSCSGMFTANSMNCLTEALGLSQPGNGSLLATHADRKQLFLNAGKRIVELTKRYYEQNDESALPRNIASKAAFENAMTLDIAMGGSTNTVLHLLAAAQEAEIDFTMSDIDKLSRKVPQLCKVAPSTQKYHMEDVHRAGGVIGILGELDRAGLLNRDVKNVLGLTLPQTLEQYDVMLTQDDAVKNMFRAGPAGIRTTQAFSQDCRWDSLDDDRANGCIRSLEHAYSKDGGLAVLYGNFAENGCIVKTAGVDDSILKFTGPAKVYESQDDAVEAILGGKVVAGDVVVIRYEGPKGGPGMQEMLYPTSFLKSMGLGKACALITDGRFSGGTSGLSIGHVSPEAASGGSIGLIEDGDLIAIDIPNRGIQLQVSDAELAARREAQEARGDKAWTPKNRERQVSFALCAYASLATSADKGAVRDKSKLGG.

Position 81 (Asp81) interacts with Mg(2+). A [2Fe-2S] cluster-binding site is contributed by Cys122. The Mg(2+) site is built by Asp123 and Lys124. The residue at position 124 (Lys124) is an N6-carboxylysine. Cys195 is a binding site for [2Fe-2S] cluster. Position 491 (Glu491) interacts with Mg(2+). Ser517 functions as the Proton acceptor in the catalytic mechanism.

It belongs to the IlvD/Edd family. As to quaternary structure, homodimer. [2Fe-2S] cluster is required as a cofactor. It depends on Mg(2+) as a cofactor.

It carries out the reaction (2R)-2,3-dihydroxy-3-methylbutanoate = 3-methyl-2-oxobutanoate + H2O. It catalyses the reaction (2R,3R)-2,3-dihydroxy-3-methylpentanoate = (S)-3-methyl-2-oxopentanoate + H2O. The protein operates within amino-acid biosynthesis; L-isoleucine biosynthesis; L-isoleucine from 2-oxobutanoate: step 3/4. It functions in the pathway amino-acid biosynthesis; L-valine biosynthesis; L-valine from pyruvate: step 3/4. Functionally, functions in the biosynthesis of branched-chain amino acids. Catalyzes the dehydration of (2R,3R)-2,3-dihydroxy-3-methylpentanoate (2,3-dihydroxy-3-methylvalerate) into 2-oxo-3-methylpentanoate (2-oxo-3-methylvalerate) and of (2R)-2,3-dihydroxy-3-methylbutanoate (2,3-dihydroxyisovalerate) into 2-oxo-3-methylbutanoate (2-oxoisovalerate), the penultimate precursor to L-isoleucine and L-valine, respectively. The polypeptide is Dihydroxy-acid dehydratase (Shigella flexneri).